A 711-amino-acid polypeptide reads, in one-letter code: Probable cyclic nucleotide-gated ion channel 10 (711 aa).

Residues 1-81 (MAFSHDNRVR…QDSFLQNWNK (81 aa)) lie on the Cytoplasmic side of the membrane. A helical membrane pass occupies residues 82 to 102 (IFLFACVVALAIDPLFFYIPI). The Extracellular segment spans residues 103 to 116 (VDSARHCLTLDSKL). Residues 117–137 (EIAASLLRTLIDAFYIIHIVF) form a helical membrane-spanning segment. The Cytoplasmic segment spans residues 138–170 (QFRTAYIAPSSRVFGRGELVDDAKAIALKYLSS). The chain crosses the membrane as a helical span at residues 171-191 (YFIIDLLSILPLPQIVVLAVI). Residues 192 to 204 (PSVNQPVSLLTKD) lie on the Extracellular side of the membrane. The chain crosses the membrane as a helical span at residues 205–225 (YLKFSIIAQYVPRILRMYPLY). Residues 226-243 (TEVTRTSGIVTETAWAGA) lie on the Cytoplasmic side of the membrane. The helical transmembrane segment at 244-264 (AWNLSLYMLASHVFGALWYLI) threads the bilayer. Residues 265–366 (SVEREDRCWQ…GQNLQTSKFV (102 aa)) are Extracellular-facing. The chain crosses the membrane as a helical span at residues 367-387 (GEIIFAISICISGLVLFALLI). Residues 388 to 711 (GNMQKYLEST…DFTANHTTDP (324 aa)) are Cytoplasmic-facing. Residues 473 to 603 (LFEI…TFRF) and Glu-544 contribute to the a nucleoside 3',5'-cyclic phosphate site. Positions 589–604 (FRRLHSKQLQHTFRFY) are calmodulin-binding. Residues 609-638 (RTWSVSFIQAAWRRYCRRKLAKSLRDEEDR) form the IQ domain. The segment at 689–711 (YTLPLLPQKPTEPDFTANHTTDP) is disordered.

Belongs to the cyclic nucleotide-gated cation channel (TC 1.A.1.5) family. In terms of assembly, homotetramer or heterotetramer.

Its subcellular location is the cell membrane. In terms of biological role, probable cyclic nucleotide-gated ion channel. This Arabidopsis thaliana (Mouse-ear cress) protein is Probable cyclic nucleotide-gated ion channel 10 (CNGC10).